The chain runs to 408 residues: 2,3-bisphosphoglycerate-independent phosphoglycerate mutase 1 (408 aa).

This sequence belongs to the BPG-independent phosphoglycerate mutase family. A-PGAM subfamily. Monomer. Mn(2+) is required as a cofactor.

It carries out the reaction (2R)-2-phosphoglycerate = (2R)-3-phosphoglycerate. It functions in the pathway carbohydrate degradation; glycolysis; pyruvate from D-glyceraldehyde 3-phosphate: step 3/5. In terms of biological role, catalyzes the interconversion of 2-phosphoglycerate and 3-phosphoglycerate. The sequence is that of 2,3-bisphosphoglycerate-independent phosphoglycerate mutase 1 (apgM1) from Archaeoglobus fulgidus (strain ATCC 49558 / DSM 4304 / JCM 9628 / NBRC 100126 / VC-16).